A 204-amino-acid polypeptide reads, in one-letter code: NADH-quinone oxidoreductase subunit C (204 aa).

Belongs to the complex I 30 kDa subunit family. As to quaternary structure, NDH-1 is composed of 14 different subunits. Subunits NuoB, C, D, E, F, and G constitute the peripheral sector of the complex.

The protein resides in the cell inner membrane. It catalyses the reaction a quinone + NADH + 5 H(+)(in) = a quinol + NAD(+) + 4 H(+)(out). In terms of biological role, NDH-1 shuttles electrons from NADH, via FMN and iron-sulfur (Fe-S) centers, to quinones in the respiratory chain. The immediate electron acceptor for the enzyme in this species is believed to be ubiquinone. Couples the redox reaction to proton translocation (for every two electrons transferred, four hydrogen ions are translocated across the cytoplasmic membrane), and thus conserves the redox energy in a proton gradient. This Rhodopseudomonas palustris (strain ATCC BAA-98 / CGA009) protein is NADH-quinone oxidoreductase subunit C.